The following is a 214-amino-acid chain: Ribonuclease S-2 (214 aa).

The N-terminal stretch at 1–22 is a signal peptide; it reads MSKSQLTSVFFILLCALSPIYG. Cysteines 38 and 43 form a disulfide. N-linked (GlcNAc...) asparagine glycosylation is present at Asn-49. His-53 functions as the Proton donor in the catalytic mechanism. An RNA-binding site is contributed by His-53. Asn-59 carries N-linked (GlcNAc...) asparagine glycosylation. Cys-67 and Cys-116 are joined by a disulfide. Residues 91–92, Lys-94, and Phe-105 contribute to the RNA site; that span reads DL. The active site involves Glu-109. 112 to 113 is a binding site for RNA; that stretch reads KH. His-113 serves as the catalytic Proton acceptor. Asn-160 carries N-linked (GlcNAc...) asparagine glycosylation. Disulfide bonds link Cys-175-Cys-204 and Cys-187-Cys-198.

It belongs to the RNase T2 family.

It localises to the secreted. The protein localises to the extracellular space. The enzyme catalyses a ribonucleotidyl-ribonucleotide-RNA + H2O = a 3'-end 3'-phospho-ribonucleotide-RNA + a 5'-end dephospho-ribonucleoside-RNA + H(+). In terms of biological role, self-incompatibility (SI) is the inherited ability of a flowering plant to prevent self-fertilization by discriminating between self and non-self pollen during pollination. In many species of the Solanaceae, self-incompatibility is controlled by the single, multiallelic locus S. This stylar glycoprotein is associated with expression of self-incompatibility in potato. The chain is Ribonuclease S-2 (S-2) from Nicotiana alata (Winged tobacco).